The chain runs to 887 residues: Bifunctional uridylyltransferase/uridylyl-removing enzyme (887 aa).

The segment at Met1–Glu337 is uridylyltransferase. The uridylyl-removing stretch occupies residues Val339–Val699. The region spanning Val457–Leu579 is the HD domain. 2 consecutive ACT domains span residues Gln700–Arg782 and Met809–His887.

Belongs to the GlnD family. Mg(2+) is required as a cofactor.

The catalysed reaction is [protein-PII]-L-tyrosine + UTP = [protein-PII]-uridylyl-L-tyrosine + diphosphate. It carries out the reaction [protein-PII]-uridylyl-L-tyrosine + H2O = [protein-PII]-L-tyrosine + UMP + H(+). With respect to regulation, uridylyltransferase (UTase) activity is inhibited by glutamine, while glutamine activates uridylyl-removing (UR) activity. Its function is as follows. Modifies, by uridylylation and deuridylylation, the PII regulatory proteins (GlnB and homologs), in response to the nitrogen status of the cell that GlnD senses through the glutamine level. Under low glutamine levels, catalyzes the conversion of the PII proteins and UTP to PII-UMP and PPi, while under higher glutamine levels, GlnD hydrolyzes PII-UMP to PII and UMP (deuridylylation). Thus, controls uridylylation state and activity of the PII proteins, and plays an important role in the regulation of nitrogen assimilation and metabolism. In Acinetobacter baumannii (strain ACICU), this protein is Bifunctional uridylyltransferase/uridylyl-removing enzyme.